A 229-amino-acid polypeptide reads, in one-letter code: Thiamine import ATP-binding protein ThiQ (229 aa).

The ABC transporter domain occupies 2 to 229 (LHLENIRVRQ…NNAEPLRPWM (228 aa)). Position 32-39 (32-39 (GASGSGKS)) interacts with ATP.

It belongs to the ABC transporter superfamily. Thiamine importer (TC 3.A.1.19.1) family. In terms of assembly, the complex is composed of two ATP-binding proteins (ThiQ), two transmembrane proteins (ThiP) and a solute-binding protein (ThiB).

Its subcellular location is the cell inner membrane. The enzyme catalyses thiamine(out) + ATP + H2O = thiamine(in) + ADP + phosphate + H(+). Part of the ABC transporter complex ThiBPQ involved in thiamine import. Responsible for energy coupling to the transport system. The protein is Thiamine import ATP-binding protein ThiQ of Jannaschia sp. (strain CCS1).